A 134-amino-acid polypeptide reads, in one-letter code: Profilin (134 aa).

This sequence belongs to the profilin family. Interacts with host Tpm1. Interacts with protein A25.

The protein resides in the host cytoplasm. Participates in either intracellular transport of viral proteins or intercellular spread of the virus. Cellular profilins modulate actin filament dynamics (polymerization and depolymerization) via direct binding to actin through an actin-binding domain as well as by modulation of other actin-binding proteins. In contrast to cellular homologs, the poxvirus profilins seem to bind actin only weakly. In Ectromelia virus (strain Moscow) (ECTV), this protein is Profilin.